The sequence spans 254 residues: Triosephosphate isomerase 2 (254 aa).

Residue 9-11 (NMK) participates in substrate binding. His-96 (electrophile) is an active-site residue. Catalysis depends on Glu-168, which acts as the Proton acceptor. Gly-174 and Ser-212 together coordinate substrate.

The protein belongs to the triosephosphate isomerase family. As to quaternary structure, homodimer.

Its subcellular location is the cytoplasm. The catalysed reaction is D-glyceraldehyde 3-phosphate = dihydroxyacetone phosphate. It participates in polyol metabolism; glycerol degradation. In terms of biological role, involved in the glycerol metabolism. Catalyzes stereospecifically the conversion of dihydroxyacetone phosphate (DHAP) to D-glyceraldehyde-3-phosphate (G3P). In Listeria innocua serovar 6a (strain ATCC BAA-680 / CLIP 11262), this protein is Triosephosphate isomerase 2.